A 229-amino-acid polypeptide reads, in one-letter code: Large ribosomal subunit protein uL1 (229 aa).

It belongs to the universal ribosomal protein uL1 family. Part of the 50S ribosomal subunit.

Its function is as follows. Binds directly to 23S rRNA. The L1 stalk is quite mobile in the ribosome, and is involved in E site tRNA release. Functionally, protein L1 is also a translational repressor protein, it controls the translation of the L11 operon by binding to its mRNA. The chain is Large ribosomal subunit protein uL1 from Haemophilus influenzae (strain 86-028NP).